A 734-amino-acid chain; its full sequence is Photosystem I P700 chlorophyll a apoprotein A2 (734 aa).

8 consecutive transmembrane segments (helical) span residues 46–69 (IFASHFGQLAVIFLWTSGNLFHVA), 135–158 (LYQGALFLLGLAAVSLAAGWLHLQ), 175–199 (LNHHLSGLFGVSSLAWSGHLVHVAI), 273–291 (IAHHHLAIAVLFIIAGHQY), 330–353 (LHFQLGLALASLGVITSLVAQHMY), 369–395 (AALYTHHQYIAGFIMSGAFAHGAIFFI), 417–439 (AIISHLSWASLFLGFHTLGLYVH), and 517–535 (FLVHHAIALGLHTTTLILV). [4Fe-4S] cluster-binding residues include C559 and C568. Transmembrane regions (helical) follow at residues 575 to 596 (AFYLAIFWMLNTIGWVTFYWHW) and 643 to 665 (LSVWAWMFLFGHLIWATGFMFLI). Residues H654, M662, and Y670 each coordinate chlorophyll a. W671 lines the phylloquinone pocket. The helical transmembrane segment at 707–727 (LVGLAHFSVGYIFTYAAFLIA) threads the bilayer.

The protein belongs to the PsaA/PsaB family. The PsaA/B heterodimer binds the P700 chlorophyll special pair and subsequent electron acceptors. PSI consists of a core antenna complex that captures photons, and an electron transfer chain that converts photonic excitation into a charge separation. The eukaryotic PSI reaction center is composed of at least 11 subunits. P700 is a chlorophyll a/chlorophyll a' dimer, A0 is one or more chlorophyll a, A1 is one or both phylloquinones and FX is a shared 4Fe-4S iron-sulfur center. is required as a cofactor.

The protein resides in the plastid. It is found in the chloroplast thylakoid membrane. It catalyses the reaction reduced [plastocyanin] + hnu + oxidized [2Fe-2S]-[ferredoxin] = oxidized [plastocyanin] + reduced [2Fe-2S]-[ferredoxin]. In terms of biological role, psaA and PsaB bind P700, the primary electron donor of photosystem I (PSI), as well as the electron acceptors A0, A1 and FX. PSI is a plastocyanin-ferredoxin oxidoreductase, converting photonic excitation into a charge separation, which transfers an electron from the donor P700 chlorophyll pair to the spectroscopically characterized acceptors A0, A1, FX, FA and FB in turn. Oxidized P700 is reduced on the lumenal side of the thylakoid membrane by plastocyanin. This chain is Photosystem I P700 chlorophyll a apoprotein A2, found in Chaetosphaeridium globosum (Charophycean green alga).